Here is a 679-residue protein sequence, read N- to C-terminus: MDRVTRYPILGIPQAHRGTGLVLDGDTSYTYHLVCMGPEASGWGQDEPQTWPTDHRAQQGVQRQGVSYSVHAYTGQPSPRGLHSENREDEGWQVYRLGARDAHQGRPTWALRPEDGEDKEMKTYRLDAGDADPRRLCDLERERWAVIQGQAVRKSSTVATLQGTPDHGDPRTPGPPRSTPLEENVVDREQIDFLAARQQFLSLEQANKGAPHSSPARGTPAGTTPGASQAPKAFNKPHLANGHVVPIKPQVKGVVREENKVRAVPTWASVQVVDDPGSLASVESPGTPKETPIEREIRLAQEREADLREQRGLRQATDHQELVEIPTRPLLTKLSLITAPRRERGRPSLYVQRDIVQETQREEDHRREGLHVGRASTPDWVSEGPQPGLRRALSSDSILSPAPDARAADPAPEVRKVNRIPPDAYQPYLSPGTPQLEFSAFGAFGKPSSLSTAEAKAATSPKATMSPRHLSESSGKPLSTKQEASKPPRGCPQANRGVVRWEYFRLRPLRFRAPDEPQQAQVPHVWGWEVAGAPALRLQKSQSSDLLERERESVLRREQEVAEERRNALFPEVFSPTPDENSDQNSRSSSQASGITGSYSVSESPFFSPIHLHSNVAWTVEDPVDSAPPGQRKKEQWYAGINPSDGINSEVLEAIRVTRHKNAMAERWESRIYASEEDD.

Serine 78 carries the post-translational modification Phosphoserine; by CDK1; in vitro. Disordered regions lie at residues 151-182 and 206-245; these read AVRK…TPLE and ANKG…GHVV. Residues 153–163 show a composition bias toward polar residues; that stretch reads RKSSTVATLQG. Position 156 is a phosphoserine (serine 156). Phosphothreonine; by CDK1; in vitro is present on residues threonine 164 and threonine 172. Position 179 is a phosphothreonine (threonine 179). At serine 214 the chain carries Phosphoserine; by CDK1; in vitro. Threonine 219 carries the post-translational modification Phosphothreonine. Position 224 is a phosphothreonine; by CDK1; in vitro (threonine 224). Serine 284 carries the phosphoserine; by CDK1; in vitro modification. A Phosphothreonine; by CDK1; in vitro modification is found at threonine 287. A Phosphoserine modification is found at serine 348. The segment covering 360–371 has biased composition (basic and acidic residues); that stretch reads QREEDHRREGLH. The segment at 360–419 is disordered; sequence QREEDHRREGLHVGRASTPDWVSEGPQPGLRRALSSDSILSPAPDARAADPAPEVRKVNR. Threonine 377 carries the post-translational modification Phosphothreonine; by CDK1; in vitro. At serine 382 the chain carries Phosphoserine; by CDK1; in vitro. Phosphoserine; by PLK1; in vitro is present on residues serine 394, serine 395, and serine 397. At serine 400 the chain carries Phosphoserine. Low complexity predominate over residues 401–411; that stretch reads PAPDARAADPA. Position 430 is a phosphoserine (serine 430). Residues 447–494 are disordered; that stretch reads PSSLSTAEAKAATSPKATMSPRHLSESSGKPLSTKQEASKPPRGCPQA. Serine 471 is modified (phosphoserine; by PLK1; in vitro). Residues 472 to 482 are compositionally biased toward polar residues; it reads ESSGKPLSTKQ. Phosphoserine is present on residues serine 541 and serine 543. Positions 545–569 form a coiled coil; that stretch reads DLLERERESVLRREQEVAEERRNAL. The segment covering 557 to 567 has biased composition (basic and acidic residues); that stretch reads REQEVAEERRN. Disordered stretches follow at residues 557–598 and 622–643; these read REQE…ITGS and DPVD…GINP. Serine 575 carries the post-translational modification Phosphoserine; by CDK1; in vitro. Residue threonine 577 is modified to Phosphothreonine. A phosphoserine; by PLK1; in vitro mark is found at serine 582 and serine 586. The span at 583 to 593 shows a compositional bias: low complexity; that stretch reads DQNSRSSSQAS. Position 675 is a phosphoserine (serine 675).

It belongs to the MISP family. As to quaternary structure, associates with F-actin. Interacts with DCTN1; this interaction regulates DCTN1 distribution at the cell cortex. Interacts with PTK2/FAK and MAPRE1. In terms of processing, phosphorylated by CDK1 and PLK1. CDK1 is the priming kinase for PLK1 phosphorylation. Phosphorylation by PLK1 is required for proper spindle orientation at metaphase.

It localises to the cell junction. The protein resides in the focal adhesion. The protein localises to the cytoplasm. It is found in the cytoskeleton. Its subcellular location is the cell cortex. Plays a role in mitotic spindle orientation and mitotic progression. Regulates the distribution of dynactin at the cell cortex in a PLK1-dependent manner, thus stabilizing cortical and astral microtubule attachments required for proper mitotic spindle positioning. May link microtubules to the actin cytospkeleton and focal adhesions. May be required for directed cell migration and centrosome orientation. May also be necessary for proper stacking of the Golgi apparatus. The sequence is that of Mitotic interactor and substrate of PLK1 from Homo sapiens (Human).